Reading from the N-terminus, the 240-residue chain is UDP-2,3-diacylglucosamine hydrolase (240 aa).

The Mn(2+) site is built by Asp-8, His-10, Asp-41, Asn-79, and His-114. 79–80 lines the substrate pocket; it reads NR. Substrate contacts are provided by Asp-122, Ser-160, Asn-164, Lys-167, and His-195. Mn(2+) contacts are provided by His-195 and His-197.

This sequence belongs to the LpxH family. Requires Mn(2+) as cofactor.

The protein resides in the cell inner membrane. The catalysed reaction is UDP-2-N,3-O-bis[(3R)-3-hydroxytetradecanoyl]-alpha-D-glucosamine + H2O = 2-N,3-O-bis[(3R)-3-hydroxytetradecanoyl]-alpha-D-glucosaminyl 1-phosphate + UMP + 2 H(+). It functions in the pathway glycolipid biosynthesis; lipid IV(A) biosynthesis; lipid IV(A) from (3R)-3-hydroxytetradecanoyl-[acyl-carrier-protein] and UDP-N-acetyl-alpha-D-glucosamine: step 4/6. Hydrolyzes the pyrophosphate bond of UDP-2,3-diacylglucosamine to yield 2,3-diacylglucosamine 1-phosphate (lipid X) and UMP by catalyzing the attack of water at the alpha-P atom. Involved in the biosynthesis of lipid A, a phosphorylated glycolipid that anchors the lipopolysaccharide to the outer membrane of the cell. The polypeptide is UDP-2,3-diacylglucosamine hydrolase (Pectobacterium carotovorum subsp. carotovorum (strain PC1)).